We begin with the raw amino-acid sequence, 91 residues long: uncharacterized protein (91 aa).

The signal sequence occupies residues 1–20; sequence MFSRVLALLAVLLLSANTWA.

The protein belongs to the BhsA/McbA family.

The protein resides in the periplasm. This is an uncharacterized protein from Escherichia coli O157:H7.